The sequence spans 120 residues: MFYWILLALAIVAEITGTLSMKWASVGNGNAGYILMLVMITLSYIFLSFAVKKIALGVAYALWEGIGILFITVFSVLLFDEVLSTMKIVGLLTLIVGIVLIKSGTRKPGKPVKEATRATI.

A run of 4 helical transmembrane segments spans residues 1–21 (MFYW…TLSM), 31–51 (AGYI…SFAV), 54–74 (IALG…ITVF), and 81–101 (EVLS…IVLI).

This sequence belongs to the drug/metabolite transporter (DMT) superfamily. Small multidrug resistance (SMR) (TC 2.A.7.1) family. MdtJ subfamily. In terms of assembly, forms a complex with MdtI.

The protein localises to the cell inner membrane. Functionally, catalyzes the excretion of spermidine. The chain is Spermidine export protein MdtJ from Salmonella arizonae (strain ATCC BAA-731 / CDC346-86 / RSK2980).